Consider the following 118-residue polypeptide: Small ribosomal subunit protein uS13 (118 aa).

Residues 94 to 118 (GLPVRGQRTKTNARTRKGPRKPIKK) are disordered.

This sequence belongs to the universal ribosomal protein uS13 family. In terms of assembly, part of the 30S ribosomal subunit. Forms a loose heterodimer with protein S19. Forms two bridges to the 50S subunit in the 70S ribosome.

In terms of biological role, located at the top of the head of the 30S subunit, it contacts several helices of the 16S rRNA. In the 70S ribosome it contacts the 23S rRNA (bridge B1a) and protein L5 of the 50S subunit (bridge B1b), connecting the 2 subunits; these bridges are implicated in subunit movement. Contacts the tRNAs in the A and P-sites. The chain is Small ribosomal subunit protein uS13 from Histophilus somni (strain 129Pt) (Haemophilus somnus).